The following is a 215-amino-acid chain: UPF0502 protein YceH (215 aa).

Lys80 carries the N6-acetyllysine modification.

This sequence belongs to the UPF0502 family.

The polypeptide is UPF0502 protein YceH (Escherichia fergusonii (strain ATCC 35469 / DSM 13698 / CCUG 18766 / IAM 14443 / JCM 21226 / LMG 7866 / NBRC 102419 / NCTC 12128 / CDC 0568-73)).